A 226-amino-acid polypeptide reads, in one-letter code: Transcriptional regulatory protein PcoR (226 aa).

The Response regulatory domain occupies 3–117; it reads RILIVEDEQK…ELVARVRTLL (115 aa). Asp52 carries the post-translational modification 4-aspartylphosphate. A DNA-binding region (ompR/PhoB-type) is located at residues 125 to 223; it reads ATVCTIADMT…VRGAGYVLEI (99 aa).

In terms of processing, phosphorylated by PcoS.

It localises to the cytoplasm. In terms of biological role, probable member of a two-component regulatory system PcoS/PcoR. May be involved in the activation of copper resistance gene operon pcoABCD by binding to a specific site on the cop operon promoter (copper box). In Escherichia coli, this protein is Transcriptional regulatory protein PcoR (pcoR).